The following is a 488-amino-acid chain: Auxin transporter-like protein 1 (488 aa).

The disordered stretch occupies residues 1 to 36 (MSGEKQAEESIVVSGEDEVAGRKVEDSAAEEDIDGN). Topologically, residues 1 to 64 (MSGEKQAEES…DAWFSCASNQ (64 aa)) are cytoplasmic. A helical transmembrane segment spans residues 65-82 (VAQVLLTLPYSFSQLGML). At 83 to 84 (SG) the chain is on the extracellular side. A helical membrane pass occupies residues 85–105 (ILLQIFYGLMGSWTAYLISVL). Topologically, residues 106–141 (YVEYRARMEKQEAKSFKNHVIQWFEVLDGLLGPYWK) are cytoplasmic. A helical transmembrane segment spans residues 142-162 (AAGLAFNCTFLLFGSVIQLIA). Residues 163 to 178 (CASNIYYINDRLDKRT) lie on the Extracellular side of the membrane. Residues 179–199 (WTYIFGACCATTVFIPSFHNY) form a helical membrane-spanning segment. Topologically, residues 200-202 (RIW) are cytoplasmic. The helical transmembrane segment at 203-223 (SFLGLGMTTYTAWYLTIASFL) threads the bilayer. Residues 224 to 238 (HGQAEGVTHSGPTKL) lie on the Extracellular side of the membrane. Residues 239–259 (VLYFTGATNILYTFGGHAVTV) form a helical membrane-spanning segment. Residues 260–273 (EIMHAMWKPRKFKS) are Cytoplasmic-facing. A helical membrane pass occupies residues 274–294 (IYLMATLYVFTLTLPSASAVY). Residues 295–320 (WAFGDQLLNHSNAFSLLPKTRFRDTA) lie on the Extracellular side of the membrane. N303 carries an N-linked (GlcNAc...) asparagine glycan. The helical transmembrane segment at 321–341 (VILMLIHQFITFGFACTPLYF) threads the bilayer. Residues 342–362 (VWEKAIGMHHTKSLCLRALVR) are Cytoplasmic-facing. Residues 363-383 (LPVVVPIWFLAIIFPFFGPIN) traverse the membrane as a helical segment. Position 384 (S384) is a topological domain, extracellular. The chain crosses the membrane as a helical span at residues 385 to 405 (AVGALLVTFTVYIIPALAHML). Topologically, residues 406-427 (TYRTASARRNAAEKPPFFIPSW) are cytoplasmic. A helical membrane pass occupies residues 428 to 448 (AGVYVINAFIVVWVLVLGFGF). Over 449–488 (GGWASMTNFIRQIDTFGLFAKCYQCKPPPAPIAAGAHHRR) the chain is Extracellular.

Belongs to the amino acid/polyamine transporter 2 family. Amino acid/auxin permease (AAAP) (TC 2.A.18.1) subfamily.

It localises to the cell membrane. Its function is as follows. Carrier protein involved in proton-driven auxin influx. Mediates the formation of auxin gradient from developing leaves (site of auxin biosynthesis) to tips by contributing to the loading of auxin in vascular tissues and facilitating acropetal (base to tip) auxin transport within inner tissues of the root apex, and basipetal (tip to base) auxin transport within outer tissues of the root apex. This chain is Auxin transporter-like protein 1 (LAX1), found in Arabidopsis thaliana (Mouse-ear cress).